Consider the following 93-residue polypeptide: Small ribosomal subunit protein uS19 (93 aa).

Belongs to the universal ribosomal protein uS19 family.

Its function is as follows. Protein S19 forms a complex with S13 that binds strongly to the 16S ribosomal RNA. The polypeptide is Small ribosomal subunit protein uS19 (Helicobacter pylori (strain G27)).